A 473-amino-acid chain; its full sequence is Homeobox protein ATH1 (473 aa).

The SR/KY domain stretch occupies residues 205–221 (SKYLHSVQEILSHFAAY). Residues 266–336 (QRRALEAKKT…NLRERICKKI (71 aa)) form a BELL domain region. The homeobox DNA-binding region spans 372–434 (IWRPQRGLPE…NARVRLWKPM (63 aa)). The disordered stretch occupies residues 448–473 (NNSHIQPNGPTLRMPKSVMMSQAMHK).

The protein belongs to the TALE/BELL homeobox family. In terms of assembly, may form heterodimeric complex with the TALE/KNOX protein STM. As to expression, most abundant in flowers.

Its subcellular location is the nucleus. Functionally, transcription factor which may be involved in the signal transduction pathway downstream of the COP1 gene. Controls floral competency as a specific activator of FLC expression. Is responsive of the nuclear import of SHOOT MERISTEMLESS (STM). The polypeptide is Homeobox protein ATH1 (ATH1) (Arabidopsis thaliana (Mouse-ear cress)).